A 297-amino-acid chain; its full sequence is Probable endonuclease 4 (297 aa).

The Zn(2+) site is built by His69, His110, Glu145, Asp179, His182, His214, Asp227, His229, and Glu259.

Belongs to the AP endonuclease 2 family. Zn(2+) is required as a cofactor.

It catalyses the reaction Endonucleolytic cleavage to 5'-phosphooligonucleotide end-products.. Its function is as follows. Endonuclease IV plays a role in DNA repair. It cleaves phosphodiester bonds at apurinic or apyrimidinic (AP) sites, generating a 3'-hydroxyl group and a 5'-terminal sugar phosphate. In Listeria monocytogenes serotype 4b (strain F2365), this protein is Probable endonuclease 4.